The sequence spans 118 residues: Large ribosomal subunit protein bL20 (118 aa).

Belongs to the bacterial ribosomal protein bL20 family.

In terms of biological role, binds directly to 23S ribosomal RNA and is necessary for the in vitro assembly process of the 50S ribosomal subunit. It is not involved in the protein synthesizing functions of that subunit. This chain is Large ribosomal subunit protein bL20, found in Campylobacter curvus (strain 525.92).